The following is a 340-amino-acid chain: Protein RecA (340 aa).

74 to 81 (GPESSGKT) lines the ATP pocket.

This sequence belongs to the RecA family.

It localises to the cytoplasm. Its function is as follows. Can catalyze the hydrolysis of ATP in the presence of single-stranded DNA, the ATP-dependent uptake of single-stranded DNA by duplex DNA, and the ATP-dependent hybridization of homologous single-stranded DNAs. It interacts with LexA causing its activation and leading to its autocatalytic cleavage. This is Protein RecA from Porphyromonas gingivalis (strain ATCC 33277 / DSM 20709 / CIP 103683 / JCM 12257 / NCTC 11834 / 2561).